A 186-amino-acid chain; its full sequence is CoB--CoM heterodisulfide reductase iron-sulfur subunit C 2 (186 aa).

4Fe-4S ferredoxin-type domains lie at 26–56 (GEDIVKSIKACYQCGTCTGSCPSGRRTAYRT) and 67–99 (LDDVLDSDDIWYCTTCYTCYERCPRDVKITEII). Positions 36, 39, 42, 46, 79, 82, 85, and 89 each coordinate [4Fe-4S] cluster.

The protein belongs to the HdrC family. In terms of assembly, the heterodisulfide reductase is composed of three subunits; HdrA, HdrB and HdrC. [4Fe-4S] cluster serves as cofactor.

Its pathway is cofactor metabolism; coenzyme M-coenzyme B heterodisulfide reduction; coenzyme B and coenzyme M from coenzyme M-coenzyme B heterodisulfide: step 1/1. Part of a complex that catalyzes the reversible reduction of CoM-S-S-CoB to the thiol-coenzymes H-S-CoM (coenzyme M) and H-S-CoB (coenzyme B). The chain is CoB--CoM heterodisulfide reductase iron-sulfur subunit C 2 (hdrC2) from Methanocaldococcus jannaschii (strain ATCC 43067 / DSM 2661 / JAL-1 / JCM 10045 / NBRC 100440) (Methanococcus jannaschii).